The chain runs to 166 residues: Ribosome maturation factor RimM (166 aa).

The 72-residue stretch at 94-165 (EGEYYLGKLI…TIELKVLDLL (72 aa)) folds into the PRC barrel domain.

It belongs to the RimM family. As to quaternary structure, binds ribosomal protein uS19.

It is found in the cytoplasm. An accessory protein needed during the final step in the assembly of 30S ribosomal subunit, possibly for assembly of the head region. Essential for efficient processing of 16S rRNA. May be needed both before and after RbfA during the maturation of 16S rRNA. It has affinity for free ribosomal 30S subunits but not for 70S ribosomes. The polypeptide is Ribosome maturation factor RimM (Borreliella afzelii (strain PKo) (Borrelia afzelii)).